The chain runs to 82 residues: Large ribosomal subunit protein bL27 (82 aa).

Positions 1-20 (MATKKAGGSSSNGRDSIGKR) are disordered.

This sequence belongs to the bacterial ribosomal protein bL27 family.

This Neorickettsia sennetsu (strain ATCC VR-367 / Miyayama) (Ehrlichia sennetsu) protein is Large ribosomal subunit protein bL27.